The primary structure comprises 457 residues: Transcription factor CP2-like protein 1 (457 aa).

The interval 1-52 (MLFWHTQPEHYNQHNSGSYLRDVLALPIFKQEEPQLSPENEARLPPLQYVLC) is mediate transcriptional repression. Residues 43-280 (RLPPLQYVLC…PSPSYNGSPN (238 aa)) enclose the Grh/CP2 DB domain. Disordered regions lie at residues 219 to 245 (KPKG…KEKY) and 271 to 301 (PSPS…LPVG). Over residues 221–245 (KGADRKQETDREKMEKRTAQEKEKY) the composition is skewed to basic and acidic residues. The segment at 261–365 (PDVAYQVNSA…IRLFNAIKGR (105 aa)) is SAM2-like domain. A compositionally biased stretch (polar residues) spans 271–281 (PSPSYNGSPNS).

This sequence belongs to the grh/CP2 family. CP2 subfamily. In terms of assembly, forms homohexamers via its SAM-like domain. Interacts with MTA1; which is indispensable for TFCP2L1-mediated self-renewal-promoting effect and endoderm-inhibiting action.

It is found in the nucleus. Transcription factor that facilitates establishment and maintenance of pluripotency in embryonic stem cells (ESCs). With KLF2, acts as the major effector of self-renewal that mediates induction of pluripotency downstream of LIF/STAT3 and Wnt/beta-catenin signaling. Required for normal duct development in the salivary gland and kidney. Coordinates the development of the kidney collecting ducts intercalated (IC) and principal (PC) cells, which regulate acid-base and salt-water homeostasis, respectively. Regulates the expression of IC genes including subunits B1 and D2 of the V-ATPase complex, OXGR1, CA12, SLC4A1, AQP6 and IC-specific transcription factor FOXI1. Also regulates the expression of JAG1 and subsequent notch signaling in the collecting duct. JAG1 initiates notch signaling in PCs but inhibits notch signaling in ICs. Acts as a transcriptional suppressor that may suppress UBP1-mediated transcriptional activation. Modulates the placental expression of CYP11A1. The polypeptide is Transcription factor CP2-like protein 1 (TFCP2L1) (Pongo abelii (Sumatran orangutan)).